We begin with the raw amino-acid sequence, 414 residues long: Ena/VASP-like protein (414 aa).

Residues 1–112 form the WH1 domain; that stretch reads MSEQSICQAR…NAMLFALNIM (112 aa). The residue at position 130 (serine 130) is a Phosphoserine. The segment at 157–369 is disordered; the sequence is ATGPILPPGH…SRVKPAGSVN (213 aa). Residues 179–204 show a composition bias toward pro residues; it reads GPPPPPPPPVPPPPTGSTPPPPPPLP. Residues 217–228 show a composition bias toward low complexity; it reads SASGLAAALAGA. The EVH2 block A stretch occupies residues 220 to 240; that stretch reads GLAAALAGAKLRRVQRPEDAS. The EVH2 stretch occupies residues 220–411; that stretch reads GLAAALAGAK…DAIRQELSGI (192 aa). The KLKR motif lies at 229 to 232; that stretch reads KLRR. A compositionally biased stretch (low complexity) spans 240 to 251; the sequence is SGGSSPSGTSKS. 2 positions are modified to phosphoserine: serine 244 and serine 257. Residues 263–280 are EVH2 block B; the sequence is GGLMEEMNKLLAKRRKAA. Polar residues predominate over residues 297-318; sequence EDPSTSPSPGTRATSQPPNSSE. Residues serine 302, serine 304, serine 327, serine 329, serine 339, serine 347, serine 352, and serine 367 each carry the phosphoserine modification. Over residues 319–329 the composition is skewed to basic and acidic residues; sequence AGRKPWERSNS. The segment at 340 to 360 is required for interaction with ZDHHC17; it reads RTPSVAKSPEAKSPLQSQPHS. Residues 377-411 are EVH2 block C; that stretch reads DLDRMKQEILEEVVRELHKVKEEIIDAIRQELSGI.

It belongs to the Ena/VASP family. As to quaternary structure, homotetramer. Binds to the SH3 domains of ABL1, LYN and SRC. Also binds to profilin, with preference for isoform IIa of PFN2, and the WW domain of APBB1/FE65. Binds to SEMA6A. Interacts, via the Pro-rich region, with the C-terminal SH3 domain of DNMBP. Interacts with RAPH1. Binds, via the EVH1 domain, the Pro-rich domain of Listeria monocytogenes actA. Binds, via the EVH1 domain, the Pro-rich domain of ZYX. Interacts with FYB1. Interacts with ZDHHC17. Phosphorylated by PKA; phosphorylation abolishes binding to SH3 domains of ABL and SRC. Highest expression in thymus and spleen (at protein level). Low levels in placenta, ovary, testis, fat and lung (at protein level). Isoform 1 and isoform 2 are expressed in cortical neurons and glial cells.

It localises to the cytoplasm. Its subcellular location is the cytoskeleton. The protein localises to the stress fiber. The protein resides in the cell projection. It is found in the lamellipodium. Its function is as follows. Ena/VASP proteins are actin-associated proteins involved in a range of processes dependent on cytoskeleton remodeling and cell polarity such as axon guidance and lamellipodial and filopodial dynamics in migrating cells. EVL enhances actin nucleation and polymerization. This Mus musculus (Mouse) protein is Ena/VASP-like protein (Evl).